The chain runs to 1778 residues: Nuclear receptor corepressor 1 (1778 aa).

The SANT domain occupies 125–176 (DRLEEWSPEERSLFKSRQADHVKIFHGLTEFFVDKTASDLVLFYYMNKKTED). The Myb-like domain occupies 356–398 (WTDDEKTKLVTLINSSPTLDWVSISEGMNRRPNECKMQYDAMN). Acidic residues predominate over residues 409 to 421 (VDEEDGNGQEEGG). Disordered regions lie at residues 409 to 671 (VDEE…TVST), 992 to 1024 (SLTP…AGRS), 1195 to 1218 (KLQQ…ATPQ), 1276 to 1339 (QHLQ…SRSV), 1414 to 1434 (PPKT…RTLS), and 1646 to 1718 (AAPT…PPLP). Composition is skewed to low complexity over residues 431-442 (SSAAARRSGLAR) and 450-469 (TPRA…VTRA). Residues 478 to 493 (DLGEEIDEMEIEDNDE) show a composition bias toward acidic residues. Positions 494-513 (DASRGSRGKDSKAPSDRDGS) are enriched in basic and acidic residues. Composition is skewed to acidic residues over residues 517–545 (MEGD…EEEE) and 599–616 (ESDD…DVDE). Low complexity-rich tracts occupy residues 626-639 (SSSS…SVGG) and 649-671 (LVQQ…TVST). The segment covering 1276–1285 (QHLQQQQQHH) has biased composition (low complexity). Positions 1687 to 1696 (SSVNSNVSDV) are enriched in low complexity.

The protein belongs to the N-CoR nuclear receptor corepressors family. As to quaternary structure, interacts with gex-3. Interacts (via C-terminus) with nhr-60. In terms of tissue distribution, in larvae, expressed in pharyngeal neurons, ventral and dorsal nerve cords, tail neurons, egg-laying neurons and egg-laying muscles. Detected in the neurons of the pharyngeal nerve ring, head neurons, tail neurons and egg-laying muscles in adults. Detected in male-specific tail ganglia and rays in males.

Its subcellular location is the nucleus. Its function is as follows. Mediates transcriptional repression by certain nuclear receptors. Plays a role in development and neuronal function. May play a role in muscle-specific oxidative mitochondrial metabolism. The sequence is that of Nuclear receptor corepressor 1 from Caenorhabditis elegans.